The sequence spans 200 residues: THO complex subunit tho5 (200 aa).

This sequence belongs to the THOC5 family. Component of the THO and TREX complexes.

The protein localises to the cytoplasm. It localises to the nucleus. Component the THO subcomplex of the TREX complex, which operates in coupling transcription elongation to mRNA export. The THO complex is recruited to transcribed genes and moves along the gene with the elongating polymerase during transcription. THO is important for stabilizing nascent RNA in the RNA polymerase II elongation complex by preventing formation of DNA:RNA hybrids behind the elongating polymerase. The THO complex is also required to maintain TRAMP complex occupancy at sites of snoRNA transcription thus promoting exosome-mediated degradation of snoRNA precursors. This Schizosaccharomyces pombe (strain 972 / ATCC 24843) (Fission yeast) protein is THO complex subunit tho5.